Consider the following 179-residue polypeptide: Peptidyl-tRNA hydrolase (179 aa).

Tyr-15 provides a ligand contact to tRNA. Catalysis depends on His-20, which acts as the Proton acceptor. TRNA contacts are provided by Tyr-66, Asn-68, and Asn-114.

This sequence belongs to the PTH family. As to quaternary structure, monomer.

It localises to the cytoplasm. It catalyses the reaction an N-acyl-L-alpha-aminoacyl-tRNA + H2O = an N-acyl-L-amino acid + a tRNA + H(+). Functionally, hydrolyzes ribosome-free peptidyl-tRNAs (with 1 or more amino acids incorporated), which drop off the ribosome during protein synthesis, or as a result of ribosome stalling. Catalyzes the release of premature peptidyl moieties from peptidyl-tRNA molecules trapped in stalled 50S ribosomal subunits, and thus maintains levels of free tRNAs and 50S ribosomes. This Chlamydia muridarum (strain MoPn / Nigg) protein is Peptidyl-tRNA hydrolase.